A 596-amino-acid chain; its full sequence is Ferredoxin--nitrite reductase, chloroplastic (596 aa).

Residues methionine 1 to arginine 28 constitute a chloroplast transit peptide. The segment at methionine 1–leucine 56 is disordered. The segment covering proline 31–alanine 47 has biased composition (low complexity). Positions 474, 480, 515, and 519 each coordinate [4Fe-4S] cluster. Position 519 (cysteine 519) interacts with siroheme.

The protein belongs to the nitrite and sulfite reductase 4Fe-4S domain family. In terms of assembly, monomer. The cofactor is siroheme. Requires [4Fe-4S] cluster as cofactor.

The protein localises to the plastid. It is found in the chloroplast. The enzyme catalyses 6 oxidized [2Fe-2S]-[ferredoxin] + NH4(+) + 2 H2O = nitrite + 6 reduced [2Fe-2S]-[ferredoxin] + 8 H(+). The protein operates within nitrogen metabolism; nitrate reduction (assimilation). In terms of biological role, catalyzes the six-electron reduction of nitrite to ammonium. This chain is Ferredoxin--nitrite reductase, chloroplastic, found in Oryza sativa subsp. japonica (Rice).